Here is a 72-residue protein sequence, read N- to C-terminus: Cytochrome c oxidase subunit 8C, mitochondrial (72 aa).

A mitochondrion-targeting transit peptide spans 1-29 (MSRLLQFCSSLLRHRVVLFSKPGHSGRLS). The Mitochondrial matrix portion of the chain corresponds to 30-40 (HSESPQNQVLT). Residues 41-64 (PTESVVGIVVFFATFFIPAAYVMS) traverse the membrane as a helical segment. The Mitochondrial intermembrane portion of the chain corresponds to 65–72 (NLKFFKGE).

The protein belongs to the cytochrome c oxidase VIII family. Component of the cytochrome c oxidase (complex IV, CIV), a multisubunit enzyme composed of 14 subunits. The complex is composed of a catalytic core of 3 subunits MT-CO1, MT-CO2 and MT-CO3, encoded in the mitochondrial DNA, and 11 supernumerary subunits COX4I, COX5A, COX5B, COX6A, COX6B, COX6C, COX7A, COX7B, COX7C, COX8 and NDUFA4, which are encoded in the nuclear genome. The complex exists as a monomer or a dimer and forms supercomplexes (SCs) in the inner mitochondrial membrane with NADH-ubiquinone oxidoreductase (complex I, CI) and ubiquinol-cytochrome c oxidoreductase (cytochrome b-c1 complex, complex III, CIII), resulting in different assemblies (supercomplex SCI(1)III(2)IV(1) and megacomplex MCI(2)III(2)IV(2)).

The protein localises to the mitochondrion inner membrane. The protein operates within energy metabolism; oxidative phosphorylation. Component of the cytochrome c oxidase, the last enzyme in the mitochondrial electron transport chain which drives oxidative phosphorylation. The respiratory chain contains 3 multisubunit complexes succinate dehydrogenase (complex II, CII), ubiquinol-cytochrome c oxidoreductase (cytochrome b-c1 complex, complex III, CIII) and cytochrome c oxidase (complex IV, CIV), that cooperate to transfer electrons derived from NADH and succinate to molecular oxygen, creating an electrochemical gradient over the inner membrane that drives transmembrane transport and the ATP synthase. Cytochrome c oxidase is the component of the respiratory chain that catalyzes the reduction of oxygen to water. Electrons originating from reduced cytochrome c in the intermembrane space (IMS) are transferred via the dinuclear copper A center (CU(A)) of subunit 2 and heme A of subunit 1 to the active site in subunit 1, a binuclear center (BNC) formed by heme A3 and copper B (CU(B)). The BNC reduces molecular oxygen to 2 water molecules using 4 electrons from cytochrome c in the IMS and 4 protons from the mitochondrial matrix. This Rattus norvegicus (Rat) protein is Cytochrome c oxidase subunit 8C, mitochondrial (Cox8c).